A 306-amino-acid polypeptide reads, in one-letter code: Leucotoxin LukEv (306 aa).

Residues 1-23 (MLAATLSVGLIAPLASPIQESRA) form the signal peptide.

Belongs to the aerolysin family. As to quaternary structure, toxicity requires sequential binding and synergistic association of a class S and a class F component which form heterooligomeric complexes. LukEv (class S) associates with LukDv (class F).

The protein localises to the secreted. Functionally, part of a bi-component leucotoxin that acts by forming pores in the membrane of the target cells. The activity of LukEv-LukDv to rabbit leukocytes is similar to that of the Panton-Valentine leucocidin (PVL). LukEv-LukDv is hemolytic to rabbit red blood cells although the activity is only 8% of gamma-hemolysin. The protein is Leucotoxin LukEv (lukEv) of Staphylococcus aureus (strain NCTC 8325 / PS 47).